The sequence spans 90 residues: Small ribosomal subunit protein uS15 (90 aa).

The protein belongs to the universal ribosomal protein uS15 family. Part of the 30S ribosomal subunit. Forms a bridge to the 50S subunit in the 70S ribosome, contacting the 23S rRNA.

In terms of biological role, one of the primary rRNA binding proteins, it binds directly to 16S rRNA where it helps nucleate assembly of the platform of the 30S subunit by binding and bridging several RNA helices of the 16S rRNA. Its function is as follows. Forms an intersubunit bridge (bridge B4) with the 23S rRNA of the 50S subunit in the ribosome. The polypeptide is Small ribosomal subunit protein uS15 (Campylobacter concisus (strain 13826)).